A 335-amino-acid polypeptide reads, in one-letter code: 4-hydroxy-3-methylbut-2-enyl diphosphate reductase (335 aa).

Cys14 serves as a coordination point for [4Fe-4S] cluster. (2E)-4-hydroxy-3-methylbut-2-enyl diphosphate contacts are provided by His43 and His81. 2 residues coordinate dimethylallyl diphosphate: His43 and His81. His43 and His81 together coordinate isopentenyl diphosphate. Cys103 provides a ligand contact to [4Fe-4S] cluster. His132 contacts (2E)-4-hydroxy-3-methylbut-2-enyl diphosphate. His132 provides a ligand contact to dimethylallyl diphosphate. Isopentenyl diphosphate is bound at residue His132. Glu134 (proton donor) is an active-site residue. Position 179 (Thr179) interacts with (2E)-4-hydroxy-3-methylbut-2-enyl diphosphate. Cys209 is a [4Fe-4S] cluster binding site. (2E)-4-hydroxy-3-methylbut-2-enyl diphosphate is bound by residues Ser237, Ser238, Asn239, and Ser285. Residues Ser237, Ser238, Asn239, and Ser285 each coordinate dimethylallyl diphosphate. Residues Ser237, Ser238, Asn239, and Ser285 each contribute to the isopentenyl diphosphate site.

Belongs to the IspH family. Requires [4Fe-4S] cluster as cofactor.

It catalyses the reaction isopentenyl diphosphate + 2 oxidized [2Fe-2S]-[ferredoxin] + H2O = (2E)-4-hydroxy-3-methylbut-2-enyl diphosphate + 2 reduced [2Fe-2S]-[ferredoxin] + 2 H(+). It carries out the reaction dimethylallyl diphosphate + 2 oxidized [2Fe-2S]-[ferredoxin] + H2O = (2E)-4-hydroxy-3-methylbut-2-enyl diphosphate + 2 reduced [2Fe-2S]-[ferredoxin] + 2 H(+). Its pathway is isoprenoid biosynthesis; dimethylallyl diphosphate biosynthesis; dimethylallyl diphosphate from (2E)-4-hydroxy-3-methylbutenyl diphosphate: step 1/1. It participates in isoprenoid biosynthesis; isopentenyl diphosphate biosynthesis via DXP pathway; isopentenyl diphosphate from 1-deoxy-D-xylulose 5-phosphate: step 6/6. Its function is as follows. Catalyzes the conversion of 1-hydroxy-2-methyl-2-(E)-butenyl 4-diphosphate (HMBPP) into a mixture of isopentenyl diphosphate (IPP) and dimethylallyl diphosphate (DMAPP). Acts in the terminal step of the DOXP/MEP pathway for isoprenoid precursor biosynthesis. The chain is 4-hydroxy-3-methylbut-2-enyl diphosphate reductase from Deinococcus radiodurans (strain ATCC 13939 / DSM 20539 / JCM 16871 / CCUG 27074 / LMG 4051 / NBRC 15346 / NCIMB 9279 / VKM B-1422 / R1).